The primary structure comprises 237 residues: NAD-dependent protein deacetylase (237 aa).

Residues 1 to 237 (MLTTWLTEAK…LEETNRALQA (237 aa)) form the Deacetylase sirtuin-type domain. Positions 18, 22, 29, 30, 95, 98, and 113 each coordinate NAD(+). Phe29 is a binding site for nicotinamide. Residue Asp98 coordinates nicotinamide. The Proton acceptor role is filled by His113. Positions 121, 124, 140, and 142 each coordinate Zn(2+). NAD(+)-binding residues include Ser180, Ser181, Asn205, and Ile224.

It belongs to the sirtuin family. Class U subfamily. Zn(2+) is required as a cofactor.

It is found in the cytoplasm. It carries out the reaction N(6)-acetyl-L-lysyl-[protein] + NAD(+) + H2O = 2''-O-acetyl-ADP-D-ribose + nicotinamide + L-lysyl-[protein]. NAD-dependent protein deacetylase which modulates the activities of several enzymes which are inactive in their acetylated form. The protein is NAD-dependent protein deacetylase of Halalkalibacterium halodurans (strain ATCC BAA-125 / DSM 18197 / FERM 7344 / JCM 9153 / C-125) (Bacillus halodurans).